The primary structure comprises 95 residues: Large ribosomal subunit protein uL22c (95 aa).

It belongs to the universal ribosomal protein uL22 family. Part of the 50S ribosomal subunit.

The protein resides in the plastid. It localises to the chloroplast. In terms of biological role, this protein binds specifically to 23S rRNA. Its function is as follows. The globular domain of the protein is located near the polypeptide exit tunnel on the outside of the subunit, while an extended beta-hairpin is found that lines the wall of the exit tunnel in the center of the 70S ribosome. This Cyanidioschyzon merolae (strain NIES-3377 / 10D) (Unicellular red alga) protein is Large ribosomal subunit protein uL22c (rpl22).